We begin with the raw amino-acid sequence, 222 residues long: Protein THYLAKOID ASSEMBLY 8, chloroplastic (222 aa).

Residues 1-32 (MALSLSQTRPPSLSHSHTLSVIVPKRTFVSIR) constitute a chloroplast transit peptide. PPR repeat units lie at residues 115–149 (DLVLYADIVNALTRNKEFDEIDRLIGEIDGIDQRS) and 150–184 (DDKALAKLIRAVVGAERRESVVRVYTLMRESGWGS).

The protein belongs to the PPR family. P subfamily.

The protein resides in the plastid. The protein localises to the chloroplast thylakoid membrane. Its function is as follows. Essential protein required during embryogenesis. Mediates group II organellar RNA introns splicing (e.g. ycf3-2 and trnA). Binds weakly to specific RNA. Promotes the biogenesis of chloroplast thylakoid membranes. The sequence is that of Protein THYLAKOID ASSEMBLY 8, chloroplastic from Arabidopsis thaliana (Mouse-ear cress).